The primary structure comprises 595 residues: Chaperone protein HscA homolog (595 aa).

Belongs to the heat shock protein 70 family.

Functionally, chaperone involved in the maturation of iron-sulfur cluster-containing proteins. Has a low intrinsic ATPase activity which is markedly stimulated by HscB. This chain is Chaperone protein HscA homolog, found in Rickettsia rickettsii (strain Iowa).